The chain runs to 794 residues: GPCWLWALALGLALGPRRCPAAPLNASAAPPERCRRPAACERLRFGSCLGSALPYAHTSTLLAADSGSQEEAHGKLLLWSGLRNAPRCWDVIQPLLCAVYMPKCEDGQVELPSQTLCQATRAPCTIVERERGWPDFLKCTPDRFPEGCPNEVQNIKFNSSGQCEAPLVRTYNPKSWYEDVEGCGIQCQNPLFTETEHREMHVYIAFSSVTISCTFFTLATFVADWRNSNRYPAVILFYVNACFFVGSIGCVAQFMDGARDEIVCRADGTMRLGEPTSNETLSCVIIFVIVYYSLMSGVIWFVMLTYAWHTSFKALGTTYQPLLGKTSYFHLITWSIPFVLTVAILAVAQVDGDSVSGICFVGYKNYRYRAGFVLAPIGLVLIVGGYFLIRGVMTLFSIKSNHPGLLSEKAASKINETMLRLGIFGFLAFGFVFITFGCHFYDFFNQAEWERSFREYVLCEANVTIATQTNKPIPECEIKNRPSLLVEKINLFAMFGTGISMSTWVWTKATLLIWKRTWCRLTGQSDDQPKRIKKSKMIAKAFSKRKELLRDPGRELSFSMHTVSHDGPVAGLAFDINEPSADVSSAWAQHVTKMVARRGAILPQDVSVTPVATPVPPEERSNLWVVEADVSPELQKRSRKKKRRKKKKEEVCPERRAGLSVAPLTPSSVPRLPRLPQQPCLVAIPRHRGDTFIPTVLPGLSNGAGGLWDGRRRAHVPHFITNPFCPESGSPEDEENPGPSVGHRQHNGGRRWPPEPLPGGSGVTRTRGRRAGLAPIHSRTNLVNAELLDADLDF.

The N-terminal stretch at 1–15 (GPCWLWALALGLALG) is a signal peptide. The Extracellular segment spans residues 16–201 (PRRCPAAPLN…FTETEHREMH (186 aa)). N-linked (GlcNAc...) asparagine glycosylation occurs at Asn25. 5 disulfides stabilise this stretch: Cys34–Cys148, Cys40–Cys104, Cys48–Cys97, Cys88–Cys124, and Cys117–Cys139. The region spanning 35–151 (RRPAACERLR…DRFPEGCPNE (117 aa)) is the FZ domain. Asp65 contributes to the cholesterol binding site. Asn158 is a glycosylation site (N-linked (GlcNAc...) asparagine). Intrachain disulfides connect Cys163–Cys183 and Cys187–Cys264. Residues 202–222 (VYIAFSSVTISCTFFTLATFV) traverse the membrane as a helical segment. Residues 223 to 231 (ADWRNSNRY) lie on the Cytoplasmic side of the membrane. The chain crosses the membrane as a helical span at residues 232–252 (PAVILFYVNACFFVGSIGCVA). The Extracellular segment spans residues 253 to 283 (QFMDGARDEIVCRADGTMRLGEPTSNETLSC). Asn278 carries N-linked (GlcNAc...) asparagine glycosylation. Cysteines 283 and 359 form a disulfide. The chain crosses the membrane as a helical span at residues 284 to 304 (VIIFVIVYYSLMSGVIWFVML). Residues 305 to 327 (TYAWHTSFKALGTTYQPLLGKTS) are Cytoplasmic-facing. The chain crosses the membrane as a helical span at residues 328–348 (YFHLITWSIPFVLTVAILAVA). Over 349–371 (QVDGDSVSGICFVGYKNYRYRAG) the chain is Extracellular. Tyr363 contacts cholesterol. Residues 372 to 392 (FVLAPIGLVLIVGGYFLIRGV) form a helical membrane-spanning segment. At 393–420 (MTLFSIKSNHPGLLSEKAASKINETMLR) the chain is on the cytoplasmic side. A helical membrane pass occupies residues 421–440 (LGIFGFLAFGFVFITFGCHF). Over 441 to 493 (YDFFNQAEWERSFREYVLCEANVTIATQTNKPIPECEIKNRPSLLVEKINLFA) the chain is Extracellular. Cys459 and Cys476 form a disulfide bridge. Asn462 carries N-linked (GlcNAc...) asparagine glycosylation. The chain crosses the membrane as a helical span at residues 494–514 (MFGTGISMSTWVWTKATLLIW). At 515–794 (KRTWCRLTGQ…AELLDADLDF (280 aa)) the chain is on the cytoplasmic side. 2 disordered regions span residues 634 to 655 (LQKR…CPER) and 723 to 773 (PFCP…RAGL). Basic residues predominate over residues 637-647 (RSRKKKRRKKK).

The protein belongs to the G-protein coupled receptor Fz/Smo family. As to quaternary structure, homodimer.

The protein localises to the cell membrane. The protein resides in the cell projection. It is found in the cilium. G protein-coupled receptor which associates with the patched protein (PTCH) to transduce hedgehog protein signaling. Binding of sonic hedgehog (SHH) to its receptor patched prevents inhibition of smoothened (SMO) by patched. When active, SMO binds to and sequesters protein kinase A catalytic subunit PRKACA at the cell membrane, preventing PRKACA-mediated phosphorylation of GLI transcription factors which releases the GLI proteins from PRKACA-mediated inhibition and allows for transcriptional activation of hedgehog pathway target genes. The polypeptide is Protein smoothened (SMO) (Gallus gallus (Chicken)).